A 403-amino-acid chain; its full sequence is Histidine--tRNA ligase (403 aa).

This sequence belongs to the class-II aminoacyl-tRNA synthetase family. In terms of assembly, homodimer.

The protein resides in the cytoplasm. It catalyses the reaction tRNA(His) + L-histidine + ATP = L-histidyl-tRNA(His) + AMP + diphosphate + H(+). This is Histidine--tRNA ligase from Sulfurimonas denitrificans (strain ATCC 33889 / DSM 1251) (Thiomicrospira denitrificans (strain ATCC 33889 / DSM 1251)).